We begin with the raw amino-acid sequence, 172 residues long: Stellate protein CG33247 (172 aa).

Belongs to the casein kinase 2 subunit beta family. Interacts in vitro with the casein kinase 2 alpha subunit (CkII-alpha). The relevance of such interaction is however unclear in vivo. As to expression, probably not expressed in wild-type flies. In males lacking the Y chromosome, it is testis-specific and constitutes the main component of star-shaped crystals.

Its function is as follows. Unknown. In males lacking the Y chromosome, its strong overexpression leads to the appearance of proteinaceous star-shaped crystals in the primary spermatocytes causing meiotic drive, possibly by interfering with normal casein kinase 2 activity. This Drosophila melanogaster (Fruit fly) protein is Stellate protein CG33247 (Ste:CG33247).